We begin with the raw amino-acid sequence, 42 residues long: DRDSCIDKSRCSKYGYYQECQDCCKKAGHNGGTCMFFKCKCA.

4 disulfides stabilise this stretch: C5/C23, C11/C34, C20/C39, and C24/C41.

The protein belongs to the ergtoxin family. Gamma-KTx 1 subfamily. In terms of tissue distribution, expressed by the venom gland.

Its subcellular location is the secreted. Functionally, blocks in a reversible manner human and rat Kv11.1/KCNH2/ERG1 potassium channels. Also completely and irreversibly blocks rat Kv11.2/KCNH6/ERG2 and human Kv11.3/KCNH7/ERG3 channels. Also weakly inhibits Kir2.1/KCNJ2 and Kv1.2/KCNA2 potassium channels. This Centruroides elegans (Bark scorpion) protein is Potassium channel toxin gamma-KTx 1.8.